The following is a 518-amino-acid chain: Bifunctional methyltransferase (518 aa).

Positions 1–300 (MQYSIKQILN…SHNRVIEISP (300 aa)) are hemK. The interval 1 to 302 (MQYSIKQILN…NRVIEISPIN (302 aa)) is RF MTase. Residues 140 to 144 (GTGSG), D163, W192, N207, E347, E372, N399, and D421 each bind S-adenosyl-L-methionine. Residue 207-210 (NPPY) coordinates substrate. Residues 301-518 (INLNRSYARR…MILQHALTGH (218 aa)) are tRNA (guanine-N(7)-)-methyltransferase. Positions 305–518 (RSYARRIGKS…MILQHALTGH (214 aa)) are tRNA MTase. Residue D421 is part of the active site. Substrate contacts are provided by K425 and D457.

It in the C-terminal section; belongs to the class I-like SAM-binding methyltransferase superfamily. TrmB family. In the N-terminal section; belongs to the protein N5-glutamine methyltransferase family. PrmC subfamily.

It catalyses the reaction L-glutaminyl-[peptide chain release factor] + S-adenosyl-L-methionine = N(5)-methyl-L-glutaminyl-[peptide chain release factor] + S-adenosyl-L-homocysteine + H(+). It carries out the reaction guanosine(46) in tRNA + S-adenosyl-L-methionine = N(7)-methylguanosine(46) in tRNA + S-adenosyl-L-homocysteine. Its function is as follows. Methylates the class 1 translation termination release factors RF1/PrfA and RF2/PrfB on the glutamine residue of the universally conserved GGQ motif. Functionally, catalyzes the formation of N(7)-methylguanine at position 46 (m7G46) in tRNA. This chain is Bifunctional methyltransferase (prmC/trmB), found in Rickettsia typhi (strain ATCC VR-144 / Wilmington).